The following is a 734-amino-acid chain: Photosystem I P700 chlorophyll a apoprotein A2 (734 aa).

The next 8 membrane-spanning stretches (helical) occupy residues 46–69 (IFAS…FHVA), 135–158 (LYTA…LHLQ), 175–199 (LNHH…HVAI), 273–291 (IAHH…GHQY), 330–353 (LHFQ…QHIY), 369–395 (AALY…IFFI), 417–439 (AIIS…LYVH), and 517–535 (FLVH…LILV). 2 residues coordinate [4Fe-4S] cluster: C559 and C568. 2 helical membrane-spanning segments follow: residues 575–596 (AFYL…YFHW) and 643–665 (LGVW…MFLI). Chlorophyll a is bound by residues H654, M662, and Y670. A phylloquinone-binding site is contributed by W671. Residues 707–727 (LVGLVHFSVGYVLTYGSFLIA) traverse the membrane as a helical segment.

The protein belongs to the PsaA/PsaB family. As to quaternary structure, the PsaA/B heterodimer binds the P700 chlorophyll special pair and subsequent electron acceptors. PSI consists of a core antenna complex that captures photons, and an electron transfer chain that converts photonic excitation into a charge separation. The eukaryotic PSI reaction center is composed of at least 11 subunits. The cofactor is P700 is a chlorophyll a/chlorophyll a' dimer, A0 is one or more chlorophyll a, A1 is one or both phylloquinones and FX is a shared 4Fe-4S iron-sulfur center..

The protein resides in the plastid. Its subcellular location is the chloroplast thylakoid membrane. It carries out the reaction reduced [plastocyanin] + hnu + oxidized [2Fe-2S]-[ferredoxin] = oxidized [plastocyanin] + reduced [2Fe-2S]-[ferredoxin]. In terms of biological role, psaA and PsaB bind P700, the primary electron donor of photosystem I (PSI), as well as the electron acceptors A0, A1 and FX. PSI is a plastocyanin/cytochrome c6-ferredoxin oxidoreductase, converting photonic excitation into a charge separation, which transfers an electron from the donor P700 chlorophyll pair to the spectroscopically characterized acceptors A0, A1, FX, FA and FB in turn. Oxidized P700 is reduced on the lumenal side of the thylakoid membrane by plastocyanin or cytochrome c6. This is Photosystem I P700 chlorophyll a apoprotein A2 from Oltmannsiellopsis viridis (Marine flagellate).